The chain runs to 277 residues: Phosphatidylserine decarboxylase proenzyme (277 aa).

Active-site charge relay system; for autoendoproteolytic cleavage activity residues include Asp-88, His-144, and Ser-242. The active-site Schiff-base intermediate with substrate; via pyruvic acid; for decarboxylase activity is Ser-242. Ser-242 is modified (pyruvic acid (Ser); by autocatalysis).

Belongs to the phosphatidylserine decarboxylase family. PSD-B subfamily. Prokaryotic type I sub-subfamily. In terms of assembly, heterodimer of a large membrane-associated beta subunit and a small pyruvoyl-containing alpha subunit. The cofactor is pyruvate. Post-translationally, is synthesized initially as an inactive proenzyme. Formation of the active enzyme involves a self-maturation process in which the active site pyruvoyl group is generated from an internal serine residue via an autocatalytic post-translational modification. Two non-identical subunits are generated from the proenzyme in this reaction, and the pyruvate is formed at the N-terminus of the alpha chain, which is derived from the carboxyl end of the proenzyme. The autoendoproteolytic cleavage occurs by a canonical serine protease mechanism, in which the side chain hydroxyl group of the serine supplies its oxygen atom to form the C-terminus of the beta chain, while the remainder of the serine residue undergoes an oxidative deamination to produce ammonia and the pyruvoyl prosthetic group on the alpha chain. During this reaction, the Ser that is part of the protease active site of the proenzyme becomes the pyruvoyl prosthetic group, which constitutes an essential element of the active site of the mature decarboxylase.

The protein resides in the cell membrane. The enzyme catalyses a 1,2-diacyl-sn-glycero-3-phospho-L-serine + H(+) = a 1,2-diacyl-sn-glycero-3-phosphoethanolamine + CO2. It functions in the pathway phospholipid metabolism; phosphatidylethanolamine biosynthesis; phosphatidylethanolamine from CDP-diacylglycerol: step 2/2. Its function is as follows. Catalyzes the formation of phosphatidylethanolamine (PtdEtn) from phosphatidylserine (PtdSer). This Psychrobacter cryohalolentis (strain ATCC BAA-1226 / DSM 17306 / VKM B-2378 / K5) protein is Phosphatidylserine decarboxylase proenzyme.